Here is a 46-residue protein sequence, read N- to C-terminus: Cytochrome b559 subunit beta (46 aa).

The chain crosses the membrane as a helical span at residues 21–37; sequence WLALHTLGIPTVFFLGA. Histidine 25 lines the heme pocket.

It belongs to the PsbE/PsbF family. In terms of assembly, heterodimer of an alpha subunit and a beta subunit. PSII is composed of 1 copy each of membrane proteins PsbA, PsbB, PsbC, PsbD, PsbE, PsbF, PsbH, PsbI, PsbJ, PsbK, PsbL, PsbM, PsbT, PsbX, PsbY, PsbZ, Psb30/Ycf12, peripheral proteins PsbO, CyanoQ (PsbQ), PsbU, PsbV and a large number of cofactors. It forms dimeric complexes. Heme b is required as a cofactor.

It is found in the cellular thylakoid membrane. Functionally, this b-type cytochrome is tightly associated with the reaction center of photosystem II (PSII). PSII is a light-driven water:plastoquinone oxidoreductase that uses light energy to abstract electrons from H(2)O, generating O(2) and a proton gradient subsequently used for ATP formation. It consists of a core antenna complex that captures photons, and an electron transfer chain that converts photonic excitation into a charge separation. This Synechococcus sp. (strain CC9605) protein is Cytochrome b559 subunit beta.